We begin with the raw amino-acid sequence, 447 residues long: Exodeoxyribonuclease 7 large subunit (447 aa).

Belongs to the XseA family. As to quaternary structure, heterooligomer composed of large and small subunits.

Its subcellular location is the cytoplasm. The enzyme catalyses Exonucleolytic cleavage in either 5'- to 3'- or 3'- to 5'-direction to yield nucleoside 5'-phosphates.. In terms of biological role, bidirectionally degrades single-stranded DNA into large acid-insoluble oligonucleotides, which are then degraded further into small acid-soluble oligonucleotides. The sequence is that of Exodeoxyribonuclease 7 large subunit from Geobacter sulfurreducens (strain ATCC 51573 / DSM 12127 / PCA).